A 205-amino-acid polypeptide reads, in one-letter code: Nitrophorin-7 (205 aa).

The N-terminal stretch at 1–20 (MELYTALLAVTILSPSSIVG) is a signal peptide. 2 disulfides stabilise this stretch: C25–C144 and C62–C193. D52 serves as a coordination point for histamine. H80 and N91 together coordinate heme. Residue D154 coordinates histamine.

It belongs to the calycin superfamily. Nitrophorin family. In terms of assembly, forms oligomers (at pH 5.5). The cofactor is heme b. Expressed in the endothelial cells of the salivary glands.

The protein resides in the secreted. The enzyme catalyses 3 nitrite + 2 H(+) = 2 nitric oxide + nitrate + H2O. In terms of biological role, converts nitrite as the sole substrate to form nitric oxide gas (NO). NO(2-) serves both as an electron donor and as an electron acceptor. Binds to negatively charged cell surfaces of activated platelets; binds to L-a-phosphatidyl-L-serine (PS)-bearing phospholipid membranes. Once bound on an activated platelet, NP7 releases its stored nitric oxide gas (NO) into the victim's tissues while feeding, resulting in vasodilation and inhibition of platelet aggregation. Also acts as an anticoagulant by blocking coagulation-factor binding sites. Has antihistamine activity; binds histamine with high affinity. This Rhodnius prolixus (Triatomid bug) protein is Nitrophorin-7.